The sequence spans 114 residues: UPF0145 protein Acry_1752 (114 aa).

The protein belongs to the UPF0145 family.

The sequence is that of UPF0145 protein Acry_1752 from Acidiphilium cryptum (strain JF-5).